Reading from the N-terminus, the 279-residue chain is Putative pyruvate, phosphate dikinase regulatory protein (279 aa).

Residue 154 to 161 participates in ADP binding; sequence GVSRTSKT.

This sequence belongs to the pyruvate, phosphate/water dikinase regulatory protein family. PDRP subfamily.

It catalyses the reaction N(tele)-phospho-L-histidyl/L-threonyl-[pyruvate, phosphate dikinase] + ADP = N(tele)-phospho-L-histidyl/O-phospho-L-threonyl-[pyruvate, phosphate dikinase] + AMP + H(+). It carries out the reaction N(tele)-phospho-L-histidyl/O-phospho-L-threonyl-[pyruvate, phosphate dikinase] + phosphate + H(+) = N(tele)-phospho-L-histidyl/L-threonyl-[pyruvate, phosphate dikinase] + diphosphate. In terms of biological role, bifunctional serine/threonine kinase and phosphorylase involved in the regulation of the pyruvate, phosphate dikinase (PPDK) by catalyzing its phosphorylation/dephosphorylation. The protein is Putative pyruvate, phosphate dikinase regulatory protein of Rhodopseudomonas palustris (strain BisB18).